The sequence spans 198 residues: Dual specificity protein phosphatase 1 (198 aa).

The interval 1–20 is disordered; it reads MSSRDRGSPSSSSSSSSLPG. The span at 8 to 17 shows a compositional bias: low complexity; the sequence is SPSSSSSSSS. The interval 26–47 is caM binding domain 1; it reads EKVKNQIQALVRVIKVARTYRD. Residues 50–191 form the Tyrosine-protein phosphatase domain; the sequence is VPSLIEQGLY…LQDLEKSMQV (142 aa). Cys135 acts as the Phosphocysteine intermediate in catalysis. A caM binding domain 2 region spans residues 151–180; that stretch reads MKKHGMTLAQALQHVKSKRPVASPNAGFIR.

This sequence belongs to the protein-tyrosine phosphatase family. Non-receptor class dual specificity subfamily. As to quaternary structure, interacts with calmodulin (CaM) in a calcium Ca(2+)-dependent manner. Expressed in roots, stems, leaves and flowers.

The protein localises to the nucleus. Its subcellular location is the cytoplasm. It carries out the reaction O-phospho-L-tyrosyl-[protein] + H2O = L-tyrosyl-[protein] + phosphate. The enzyme catalyses O-phospho-L-seryl-[protein] + H2O = L-seryl-[protein] + phosphate. The catalysed reaction is O-phospho-L-threonyl-[protein] + H2O = L-threonyl-[protein] + phosphate. Inhibited by sodium vanadate and sodium tungstate. NaF and spermifine repress specifically phosphoserine and phosphothreonine phosphatase activity. Has a dual specificity toward Ser/Thr and Tyr-containing proteins. Dephosphorylates MPK4 in vitro. In Arabidopsis thaliana (Mouse-ear cress), this protein is Dual specificity protein phosphatase 1 (DSPTP1).